We begin with the raw amino-acid sequence, 238 residues long: Nicotinamide/nicotinic acid mononucleotide adenylyltransferase (238 aa).

Ser29 and Phe30 together coordinate NAD(+). 2 residues coordinate ATP: His37 and Lys70. 6 residues coordinate NAD(+): Thr107, Gly136, Asp138, Trp149, Arg168, and Asn199. Residue 204–205 coordinates ATP; the sequence is SR.

This sequence belongs to the eukaryotic NMN adenylyltransferase family. A divalent metal cation is required as a cofactor.

The protein localises to the nucleus. It carries out the reaction beta-nicotinamide D-ribonucleotide + ATP + H(+) = diphosphate + NAD(+). The catalysed reaction is nicotinate beta-D-ribonucleotide + ATP + H(+) = deamido-NAD(+) + diphosphate. It functions in the pathway cofactor biosynthesis; NAD(+) biosynthesis; deamido-NAD(+) from nicotinate D-ribonucleotide: step 1/1. The protein operates within cofactor biosynthesis; NAD(+) biosynthesis; NAD(+) from nicotinamide D-ribonucleotide: step 1/1. Its function is as follows. Catalyzes the formation of NAD(+) from nicotinamide mononucleotide (NMN) and ATP. Can also use the deamidated form; nicotinic acid mononucleotide (NaMN) as substrate. The protein is Nicotinamide/nicotinic acid mononucleotide adenylyltransferase (NMNAT) of Arabidopsis thaliana (Mouse-ear cress).